Reading from the N-terminus, the 240-residue chain is Eukaryotic translation initiation factor 3 subunit K (240 aa).

Residues 41 to 221 (YDKDIVLTIL…TIKTRNIDEK (181 aa)) enclose the PCI domain.

The protein belongs to the eIF-3 subunit K family. In terms of assembly, component of the eukaryotic translation initiation factor 3 (eIF-3) complex.

Its subcellular location is the cytoplasm. Its function is as follows. Component of the eukaryotic translation initiation factor 3 (eIF-3) complex, which is involved in protein synthesis of a specialized repertoire of mRNAs and, together with other initiation factors, stimulates binding of mRNA and methionyl-tRNAi to the 40S ribosome. The eIF-3 complex specifically targets and initiates translation of a subset of mRNAs involved in cell proliferation. The chain is Eukaryotic translation initiation factor 3 subunit K from Caenorhabditis elegans.